Reading from the N-terminus, the 231-residue chain is tRNA (guanine-N(1)-)-methyltransferase (231 aa).

S-adenosyl-L-methionine is bound by residues G112 and 132-137 (LGDFVL).

It belongs to the RNA methyltransferase TrmD family. In terms of assembly, homodimer.

The protein localises to the cytoplasm. It catalyses the reaction guanosine(37) in tRNA + S-adenosyl-L-methionine = N(1)-methylguanosine(37) in tRNA + S-adenosyl-L-homocysteine + H(+). In terms of biological role, specifically methylates guanosine-37 in various tRNAs. This is tRNA (guanine-N(1)-)-methyltransferase from Microcystis aeruginosa (strain NIES-843 / IAM M-2473).